Consider the following 392-residue polypeptide: Phosphoglycerate kinase (392 aa).

Substrate contacts are provided by residues 26-28 (DLN), R41, 64-67 (HLGR), R118, and R151. Residues K202, E319, and 345–348 (GGDT) each bind ATP.

Belongs to the phosphoglycerate kinase family. In terms of assembly, monomer.

The protein resides in the cytoplasm. The enzyme catalyses (2R)-3-phosphoglycerate + ATP = (2R)-3-phospho-glyceroyl phosphate + ADP. Its pathway is carbohydrate degradation; glycolysis; pyruvate from D-glyceraldehyde 3-phosphate: step 2/5. This Photobacterium profundum (strain SS9) protein is Phosphoglycerate kinase.